Consider the following 145-residue polypeptide: D-aminoacyl-tRNA deacylase (145 aa).

The Gly-cisPro motif, important for rejection of L-amino acids motif lies at 137-138 (GP).

It belongs to the DTD family. Homodimer.

The protein localises to the cytoplasm. It catalyses the reaction glycyl-tRNA(Ala) + H2O = tRNA(Ala) + glycine + H(+). The enzyme catalyses a D-aminoacyl-tRNA + H2O = a tRNA + a D-alpha-amino acid + H(+). In terms of biological role, an aminoacyl-tRNA editing enzyme that deacylates mischarged D-aminoacyl-tRNAs. Also deacylates mischarged glycyl-tRNA(Ala), protecting cells against glycine mischarging by AlaRS. Acts via tRNA-based rather than protein-based catalysis; rejects L-amino acids rather than detecting D-amino acids in the active site. By recycling D-aminoacyl-tRNA to D-amino acids and free tRNA molecules, this enzyme counteracts the toxicity associated with the formation of D-aminoacyl-tRNA entities in vivo and helps enforce protein L-homochirality. The sequence is that of D-aminoacyl-tRNA deacylase from Photorhabdus laumondii subsp. laumondii (strain DSM 15139 / CIP 105565 / TT01) (Photorhabdus luminescens subsp. laumondii).